Consider the following 101-residue polypeptide: Small ribosomal subunit protein uS14 (101 aa).

It belongs to the universal ribosomal protein uS14 family. Part of the 30S ribosomal subunit. Contacts proteins S3 and S10.

Binds 16S rRNA, required for the assembly of 30S particles and may also be responsible for determining the conformation of the 16S rRNA at the A site. This Polaromonas sp. (strain JS666 / ATCC BAA-500) protein is Small ribosomal subunit protein uS14.